We begin with the raw amino-acid sequence, 373 residues long: Envelope glycoprotein C homolog (373 aa).

The N-terminal stretch at 1 to 25 is a signal peptide; that stretch reads MVSNMRSTRTALTGWVGIFLVLSLQ. Residues 58 to 93 are disordered; the sequence is EVPNSPTTELSTTVATKTAVPTTESTSSSEAHRNSS. The span at 59–68 shows a compositional bias: polar residues; it reads VPNSPTTELS. A compositionally biased stretch (low complexity) spans 69 to 80; the sequence is TTVATKTAVPTT. N91, N111, N203, and N345 each carry an N-linked (GlcNAc...) asparagine; by host glycan. An Ig-like domain is found at 249–347; that stretch reads PASVDVLAPP…GDMISTSNAT (99 aa).

This sequence belongs to the herpesviridae glycoprotein C family.

This Gallus gallus (Chicken) protein is Envelope glycoprotein C homolog (gC).